Reading from the N-terminus, the 226-residue chain is ATP synthase F(0) complex subunit a (226 aa).

6 helical membrane passes run 6-26 (FATF…IMLF), 68-88 (WALM…LGLL), 97-117 (QLSM…LMGF), 138-158 (VPML…ALAV), 164-184 (ITAG…LCSI), and 193-213 (FIIL…QAYV).

It belongs to the ATPase A chain family. In terms of assembly, component of the ATP synthase complex composed at least of ATP5F1A/subunit alpha, ATP5F1B/subunit beta, ATP5MC1/subunit c (homooctomer), MT-ATP6/subunit a, MT-ATP8/subunit 8, ATP5ME/subunit e, ATP5MF/subunit f, ATP5MG/subunit g, ATP5MK/subunit k, ATP5MJ/subunit j, ATP5F1C/subunit gamma, ATP5F1D/subunit delta, ATP5F1E/subunit epsilon, ATP5PF/subunit F6, ATP5PB/subunit b, ATP5PD/subunit d, ATP5PO/subunit OSCP. ATP synthase complex consists of a soluble F(1) head domain (subunits alpha(3) and beta(3)) - the catalytic core - and a membrane F(0) domain - the membrane proton channel (subunits c, a, 8, e, f, g, k and j). These two domains are linked by a central stalk (subunits gamma, delta, and epsilon) rotating inside the F1 region and a stationary peripheral stalk (subunits F6, b, d, and OSCP). Interacts with DNAJC30; interaction is direct.

It is found in the mitochondrion inner membrane. The catalysed reaction is H(+)(in) = H(+)(out). In terms of biological role, subunit a, of the mitochondrial membrane ATP synthase complex (F(1)F(0) ATP synthase or Complex V) that produces ATP from ADP in the presence of a proton gradient across the membrane which is generated by electron transport complexes of the respiratory chain. ATP synthase complex consist of a soluble F(1) head domain - the catalytic core - and a membrane F(1) domain - the membrane proton channel. These two domains are linked by a central stalk rotating inside the F(1) region and a stationary peripheral stalk. During catalysis, ATP synthesis in the catalytic domain of F(1) is coupled via a rotary mechanism of the central stalk subunits to proton translocation. With the subunit c (ATP5MC1), forms the proton-conducting channel in the F(0) domain, that contains two crucial half-channels (inlet and outlet) that facilitate proton movement from the mitochondrial intermembrane space (IMS) into the matrix. Protons are taken up via the inlet half-channel and released through the outlet half-channel, following a Grotthuss mechanism. This chain is ATP synthase F(0) complex subunit a, found in Osphranter robustus (Wallaroo).